The chain runs to 39 residues: TIINVKCTSPKQCLKPCKDLYGPHAGEKCMNGKCKCYKI.

Disulfide bonds link Cys7-Cys29, Cys13-Cys34, and Cys17-Cys36. Residue Ile39 is modified to Isoleucine amide.

The protein belongs to the short scorpion toxin superfamily. Potassium channel inhibitor family. Alpha-KTx 02 subfamily. Expressed by the venom gland.

It localises to the secreted. Functionally, blocks human voltage-gated potassium channels Kv1.2/KCNA2 (IC(50)=0.7 nM), Kv1.3/KCNA3 (IC(50)=26.2 nM) and blocks intermediate conductance calcium-activated potassium channel KCa3.1/KCNN4 (IC(50)=56 nM). In Centruroides tecomanus (Scorpion), this protein is Potassium channel toxin alpha-KTx 2.16.